The following is a 395-amino-acid chain: MLGWSRLTFILLSGIVTCLVAQQVPPWTEDCRKSTYPPSGPTYRGPVPWYTINLDLPPYKRWHELMVVKAPALKVIVNSMKNIVNAFVPSGKIIHLVDQKLPGLLGNFPGPFEEEMKGIAAVTEIPLGEIILFNIFYEFFTICTSIITEDKEGHLLHGRNLDFGVFLGWNINNDTWVITEELKPLTVNLDFQRNNKTLFKATTFAGYVGMLTGFKPGLFSVTLNERFSIDGGFMGVMEWILGKKDAQWVGFIIRSVLENSTSYEETKNILTKTKILAPAYFILGGNQSGEGCVITRDRKQSLDIYELDPKHGRWYVVQTNYDRWKNPFFLDDRRTPAKMCLNQTTQENISFATIYDVLSTKPILNKLTVYTVLIDVTKGQFETYLRDCPDPCIGW.

The first 20 residues, 1-20 (MLGWSRLTFILLSGIVTCLV), serve as a signal peptide directing secretion. C31 and C340 are joined by a disulfide. The active-site Nucleophile is the C143. 4 N-linked (GlcNAc...) asparagine glycosylation sites follow: N195, N259, N286, and N342. The cysteines at positions 388 and 392 are disulfide-linked.

This sequence belongs to the acid ceramidase family. As to quaternary structure, heterodimer; disulfide-linked. The heterodimer is composed of the disulfide-linked alpha and beta chains produced by autocatalytic cleavage of the precursor. In terms of processing, N-glycosylated. Post-translationally, proteolytically cleaved into two chains alpha and beta that remain associated via a disulfide bond. Cleavage gives rise to a conformation change that activates the enzyme. The same catalytic Cys residue mediates the autoproteolytic cleavage and subsequent hydrolysis of lipid substrates. The beta chain may undergo an additional C-terminal processing.

The protein localises to the lysosome. It localises to the secreted. The enzyme catalyses an N-acylsphing-4-enine + H2O = sphing-4-enine + a fatty acid. It catalyses the reaction N-dodecanoylsphing-4-enine + H2O = dodecanoate + sphing-4-enine. The catalysed reaction is N-tetradecanoylsphing-4-enine + H2O = tetradecanoate + sphing-4-enine. It carries out the reaction N-hexadecanoylsphing-4-enine + H2O = sphing-4-enine + hexadecanoate. The enzyme catalyses N-octadecanoylsphing-4-enine + H2O = sphing-4-enine + octadecanoate. It catalyses the reaction N-dodecanoyl-(4R)-hydroxysphinganine + H2O = (4R)-hydroxysphinganine + dodecanoate. The catalysed reaction is N-(dodecanoyl)-sphinganine + H2O = dodecanoate + sphinganine. It carries out the reaction N-(acetyl)-sphing-4-enine + H2O = sphing-4-enine + acetate. The enzyme catalyses N-(hexanoyl)sphing-4-enine + H2O = hexanoate + sphing-4-enine. It catalyses the reaction N-octanoylsphing-4-enine + H2O = octanoate + sphing-4-enine. The catalysed reaction is N-(9Z-octadecenoyl)-sphing-4-enine + H2O = sphing-4-enine + (9Z)-octadecenoate. It carries out the reaction N-dodecanoylethanolamine + H2O = dodecanoate + ethanolamine. It participates in lipid metabolism; sphingolipid metabolism. Lysosomal ceramidase that hydrolyzes sphingolipid ceramides into sphingosine and free fatty acids at acidic pH. Ceramides, sphingosine, and its phosphorylated form sphingosine-1-phosphate are bioactive lipids that mediate cellular signaling pathways regulating several biological processes including cell proliferation, apoptosis and differentiation. Has a higher catalytic efficiency towards C12-ceramides versus other ceramides. Also catalyzes the reverse reaction allowing the synthesis of ceramides from fatty acids and sphingosine. For the reverse synthetic reaction, the natural sphingosine D-erythro isomer is more efficiently utilized as a substrate compared to D-erythro-dihydrosphingosine and D-erythro-phytosphingosine, while the fatty acids with chain lengths of 12 or 14 carbons are the most efficiently used. Also has an N-acylethanolamine hydrolase activity. By regulating the levels of ceramides, sphingosine and sphingosine-1-phosphate in the epidermis, mediates the calcium-induced differentiation of epidermal keratinocytes. Also indirectly regulates tumor necrosis factor/TNF-induced apoptosis. By regulating the intracellular balance between ceramides and sphingosine, in adrenocortical cells, probably also acts as a regulator of steroidogenesis. The chain is Acid ceramidase from Bos taurus (Bovine).